The primary structure comprises 235 residues: Large ribosomal subunit protein uL3 (235 aa).

This sequence belongs to the universal ribosomal protein uL3 family. As to quaternary structure, part of the 50S ribosomal subunit. Forms a cluster with proteins L14 and L19.

Functionally, one of the primary rRNA binding proteins, it binds directly near the 3'-end of the 23S rRNA, where it nucleates assembly of the 50S subunit. The polypeptide is Large ribosomal subunit protein uL3 (Frankia casuarinae (strain DSM 45818 / CECT 9043 / HFP020203 / CcI3)).